A 483-amino-acid polypeptide reads, in one-letter code: Glutamate--tRNA ligase (483 aa).

A 'HIGH' region motif is present at residues 11–21 (PSPTGLLHIGN). The short motif at 255 to 259 (KLSKR) is the 'KMSKS' region element. K258 serves as a coordination point for ATP.

Belongs to the class-I aminoacyl-tRNA synthetase family. Glutamate--tRNA ligase type 1 subfamily. Monomer.

It is found in the cytoplasm. The enzyme catalyses tRNA(Glu) + L-glutamate + ATP = L-glutamyl-tRNA(Glu) + AMP + diphosphate. Functionally, catalyzes the attachment of glutamate to tRNA(Glu) in a two-step reaction: glutamate is first activated by ATP to form Glu-AMP and then transferred to the acceptor end of tRNA(Glu). The sequence is that of Glutamate--tRNA ligase from Lactococcus lactis subsp. cremoris (strain SK11).